A 141-amino-acid polypeptide reads, in one-letter code: Proteasome maturation protein (141 aa).

Lys39 participates in a covalent cross-link: Glycyl lysine isopeptide (Lys-Gly) (interchain with G-Cter in SUMO2).

Belongs to the POMP/UMP1 family. Constituent of preproteasomes, but not of mature 20S proteasomes. Within the preproteasome, may directly interact with PSMB1/beta6, PSMB4/beta7, PSMB5/beta5, PSMB6/beta1 and PSMB9/beta1i. Interaction with PSMB8/beta5i is controversial. Forms tetramers.

The protein localises to the cytoplasm. It is found in the cytosol. Its subcellular location is the nucleus. The protein resides in the microsome membrane. In terms of biological role, molecular chaperone essential for the assembly of standard proteasomes and immunoproteasomes. Degraded after completion of proteasome maturation. Mediates the association of 20S preproteasome with the endoplasmic reticulum. The polypeptide is Proteasome maturation protein (POMP) (Bos taurus (Bovine)).